Consider the following 205-residue polypeptide: Cytochrome c oxidase subunit 3 (205 aa).

Transmembrane regions (helical) follow at residues Thr-29 to Val-49, Ala-72 to Ala-92, Trp-104 to Ile-124, Phe-142 to Val-162, and Ser-184 to Ile-204.

Associates with subunits I, II and IV to form cytochrome c oxidase. The 4 subunit cytochrome c oxidase forms a supercomplex with the menaquinol-cytochrome c reductase complex (cytochrome bc1).

The protein resides in the cell membrane. The enzyme catalyses 4 Fe(II)-[cytochrome c] + O2 + 8 H(+)(in) = 4 Fe(III)-[cytochrome c] + 2 H2O + 4 H(+)(out). This Corynebacterium glutamicum (strain ATCC 13032 / DSM 20300 / JCM 1318 / BCRC 11384 / CCUG 27702 / LMG 3730 / NBRC 12168 / NCIMB 10025 / NRRL B-2784 / 534) protein is Cytochrome c oxidase subunit 3 (ctaE).